Reading from the N-terminus, the 187-residue chain is UPF0301 protein ESA_00394 (187 aa).

Belongs to the UPF0301 (AlgH) family.

The chain is UPF0301 protein ESA_00394 from Cronobacter sakazakii (strain ATCC BAA-894) (Enterobacter sakazakii).